A 148-amino-acid chain; its full sequence is Hemoglobin subunit beta-1 (148 aa).

Residues 3–148 form the Globin domain; sequence EWTDAERTAI…VVSALCRQYH (146 aa). 2 residues coordinate heme b: H64 and H93.

In terms of assembly, heterotetramer of two alpha chains and two beta chains. As to expression, red blood cells.

Involved in oxygen transport from gills to the various peripheral tissues. The polypeptide is Hemoglobin subunit beta-1 (ba1) (Danio rerio (Zebrafish)).